Here is a 119-residue protein sequence, read N- to C-terminus: MVKLAFPRELRLLTPTHFTFVFQQPQRAGTPQITILGRLNQLGHPRIGLTVAKKHVKRAHERNRIKRLTRESFRLRQHELPAMDFVVVAKKGIADLDNRALTEALEKLWRRHCRQAPAS.

Belongs to the RnpA family. As to quaternary structure, consists of a catalytic RNA component (M1 or rnpB) and a protein subunit.

It catalyses the reaction Endonucleolytic cleavage of RNA, removing 5'-extranucleotides from tRNA precursor.. Its function is as follows. RNaseP catalyzes the removal of the 5'-leader sequence from pre-tRNA to produce the mature 5'-terminus. It can also cleave other RNA substrates such as 4.5S RNA. The protein component plays an auxiliary but essential role in vivo by binding to the 5'-leader sequence and broadening the substrate specificity of the ribozyme. The sequence is that of Ribonuclease P protein component from Serratia proteamaculans (strain 568).